Here is a 146-residue protein sequence, read N- to C-terminus: uncharacterized protein (146 aa).

This is an uncharacterized protein from Methanothermobacter thermautotrophicus (Methanobacterium thermoformicicum).